The following is a 54-amino-acid chain: ATP synthase protein 8 (54 aa).

Residues 13–32 traverse the membrane as a helical segment; that stretch reads ITFTFVIITLMVYILSKYIL.

The protein belongs to the ATPase protein 8 family. As to quaternary structure, F-type ATPases have 2 components, CF(1) - the catalytic core - and CF(0) - the membrane proton channel.

The protein localises to the mitochondrion membrane. Functionally, mitochondrial membrane ATP synthase (F(1)F(0) ATP synthase or Complex V) produces ATP from ADP in the presence of a proton gradient across the membrane which is generated by electron transport complexes of the respiratory chain. F-type ATPases consist of two structural domains, F(1) - containing the extramembraneous catalytic core and F(0) - containing the membrane proton channel, linked together by a central stalk and a peripheral stalk. During catalysis, ATP synthesis in the catalytic domain of F(1) is coupled via a rotary mechanism of the central stalk subunits to proton translocation. Part of the complex F(0) domain. Minor subunit located with subunit a in the membrane. The sequence is that of ATP synthase protein 8 (atp-8) from Neurospora crassa (strain ATCC 24698 / 74-OR23-1A / CBS 708.71 / DSM 1257 / FGSC 987).